The primary structure comprises 501 residues: ATP synthase subunit alpha (501 aa).

169 to 176 provides a ligand contact to ATP; it reads GDRQTGKT.

The protein belongs to the ATPase alpha/beta chains family. F-type ATPases have 2 components, CF(1) - the catalytic core - and CF(0) - the membrane proton channel. CF(1) has five subunits: alpha(3), beta(3), gamma(1), delta(1), epsilon(1). CF(0) has three main subunits: a(1), b(2) and c(9-12). The alpha and beta chains form an alternating ring which encloses part of the gamma chain. CF(1) is attached to CF(0) by a central stalk formed by the gamma and epsilon chains, while a peripheral stalk is formed by the delta and b chains.

The protein localises to the cell membrane. The enzyme catalyses ATP + H2O + 4 H(+)(in) = ADP + phosphate + 5 H(+)(out). Produces ATP from ADP in the presence of a proton gradient across the membrane. The alpha chain is a regulatory subunit. In Streptococcus equi subsp. zooepidemicus (strain H70), this protein is ATP synthase subunit alpha.